We begin with the raw amino-acid sequence, 321 residues long: Lipoyl synthase (321 aa).

[4Fe-4S] cluster contacts are provided by C68, C73, C79, C94, C98, C101, and S308. The region spanning 80-297 (FNHGTATFMI…KAEALAMGFT (218 aa)) is the Radical SAM core domain.

Belongs to the radical SAM superfamily. Lipoyl synthase family. [4Fe-4S] cluster serves as cofactor.

It localises to the cytoplasm. It carries out the reaction [[Fe-S] cluster scaffold protein carrying a second [4Fe-4S](2+) cluster] + N(6)-octanoyl-L-lysyl-[protein] + 2 oxidized [2Fe-2S]-[ferredoxin] + 2 S-adenosyl-L-methionine + 4 H(+) = [[Fe-S] cluster scaffold protein] + N(6)-[(R)-dihydrolipoyl]-L-lysyl-[protein] + 4 Fe(3+) + 2 hydrogen sulfide + 2 5'-deoxyadenosine + 2 L-methionine + 2 reduced [2Fe-2S]-[ferredoxin]. Its pathway is protein modification; protein lipoylation via endogenous pathway; protein N(6)-(lipoyl)lysine from octanoyl-[acyl-carrier-protein]: step 2/2. In terms of biological role, catalyzes the radical-mediated insertion of two sulfur atoms into the C-6 and C-8 positions of the octanoyl moiety bound to the lipoyl domains of lipoate-dependent enzymes, thereby converting the octanoylated domains into lipoylated derivatives. This Salmonella paratyphi A (strain AKU_12601) protein is Lipoyl synthase.